The chain runs to 168 residues: Mitochondrial ATP-independent inner membrane protease subunit 1a (168 aa).

The N-terminal 47 residues, 1-47, are a transit peptide targeting the mitochondrion; sequence MRMTFLSYLKQWRGTAKEAFENVSIVAKFLCLLHVTDRYIISTTHVH. Residues Ser50 and Lys94 contribute to the active site.

This sequence belongs to the peptidase S26 family. IMP1 subfamily. In terms of assembly, heterodimer of 2 subunits, IMP1A/B and IMP12.

It localises to the mitochondrion inner membrane. In terms of biological role, catalyzes the removal of transit peptides required for the targeting of proteins from the mitochondrial matrix, across the inner membrane, into the inter-membrane space. This is Mitochondrial ATP-independent inner membrane protease subunit 1a from Arabidopsis thaliana (Mouse-ear cress).